The following is a 308-amino-acid chain: Testis-specific Y-encoded protein 8 (308 aa).

This sequence belongs to the nucleosome assembly protein (NAP) family.

It is found in the cytoplasm. The protein resides in the nucleus. Its function is as follows. May be involved in sperm differentiation and proliferation. This is Testis-specific Y-encoded protein 8 (TSPY8) from Homo sapiens (Human).